The chain runs to 555 residues: Urocanate hydratase (555 aa).

NAD(+) is bound by residues 52–53, Gln130, 176–178, Glu196, Arg201, 242–243, 263–267, 273–274, and Tyr322; these read GG, GMG, NA, QTSAH, and YL. Cys410 is a catalytic residue. Gly492 contacts NAD(+).

The protein belongs to the urocanase family. Requires NAD(+) as cofactor.

It is found in the cytoplasm. The enzyme catalyses 4-imidazolone-5-propanoate = trans-urocanate + H2O. It functions in the pathway amino-acid degradation; L-histidine degradation into L-glutamate; N-formimidoyl-L-glutamate from L-histidine: step 2/3. In terms of biological role, catalyzes the conversion of urocanate to 4-imidazolone-5-propionate. The chain is Urocanate hydratase from Shewanella putrefaciens (strain CN-32 / ATCC BAA-453).